The following is a 140-amino-acid chain: Large ribosomal subunit protein uL13 (140 aa).

This sequence belongs to the universal ribosomal protein uL13 family. Part of the 50S ribosomal subunit.

In terms of biological role, this protein is one of the early assembly proteins of the 50S ribosomal subunit, although it is not seen to bind rRNA by itself. It is important during the early stages of 50S assembly. The chain is Large ribosomal subunit protein uL13 from Sulfurimonas denitrificans (strain ATCC 33889 / DSM 1251) (Thiomicrospira denitrificans (strain ATCC 33889 / DSM 1251)).